We begin with the raw amino-acid sequence, 222 residues long: Protein MKS1 (222 aa).

The interval 1 to 61 is disordered; it reads MDPSEYFAGG…PNRDQPPPYI (61 aa). Polar residues predominate over residues 12–21; that stretch reads PSDQQNQKRQ. The residue at position 30 (Ser30) is a Phosphoserine. Residues 37–46 are compositionally biased toward basic residues; the sequence is DSHKIKKPPK. A compositionally biased stretch (pro residues) spans 47–61; it reads HPAPPPNRDQPPPYI. Ser72 bears the Phosphoserine mark. Positions 83–92 match the VQ motif; sequence FMNVVQRLTG. The disordered stretch occupies residues 105–130; the sequence is GDVSPAARLASTENASPRGGKEPAAR. 2 positions are modified to phosphoserine: Ser108 and Ser120.

In terms of assembly, interacts with MPK4, WRKY25 and WRKY33. Post-translationally, phosphorylated on serine residue by MPK4.

Its subcellular location is the nucleus. Functionally, regulator of plant defense response. May contribute to MPK4-regulated defense activation by coupling the kinase to specific WRKY transcription factors. This Arabidopsis thaliana (Mouse-ear cress) protein is Protein MKS1 (MKS1).